The following is a 468-amino-acid chain: MSQGKIVQIIGAVVDVEFQRNEVPKVYDALKVEGTAITLEVQQQLGDGVVRTIALGSTDGLKRNLVATNTERAISVPVGAGTLGRIMDVLGRPIDEAGDVQASDHWEIHRSAPSYEDQASTTELLETGIKVIDLMCPFAKGGKVGLFGGAGVGKTVNMMELINNIAKAHSGLSVFAGVGERTREGNDFYHEMKDSNVLDKVAMVYGQMNEPPGNRLRVALTGLTMAEYFRDEKDASGKGKDVLLFVDNIYRYTLAGTEVSALLGRMPSAVGYQPTLAEEMGVLQERITSTKSGSITSIQAVYVPADDLTDPSPATTFAHLDSTVTLSRNIASLGIYPAVDPLDSTSRQMDPLVIGHEHYDTAQRVQQTLQKYKELKDIIAILGMDELSEEDKQSVSRARKIERFFSQPFHVAEVFTGSPGKYVSLKDTIRGFKAICDGEYDHLPEQAFYMVGSIEEAVEKANKMSAKA.

ATP is bound at residue 148–155 (GGAGVGKT).

Belongs to the ATPase alpha/beta chains family. In terms of assembly, F-type ATPases have 2 components, CF(1) - the catalytic core - and CF(0) - the membrane proton channel. CF(1) has five subunits: alpha(3), beta(3), gamma(1), delta(1), epsilon(1). CF(0) has three main subunits: a(1), b(2) and c(9-12). The alpha and beta chains form an alternating ring which encloses part of the gamma chain. CF(1) is attached to CF(0) by a central stalk formed by the gamma and epsilon chains, while a peripheral stalk is formed by the delta and b chains.

The protein localises to the cell inner membrane. It carries out the reaction ATP + H2O + 4 H(+)(in) = ADP + phosphate + 5 H(+)(out). Produces ATP from ADP in the presence of a proton gradient across the membrane. The catalytic sites are hosted primarily by the beta subunits. The protein is ATP synthase subunit beta of Xanthomonas euvesicatoria pv. vesicatoria (strain 85-10) (Xanthomonas campestris pv. vesicatoria).